A 139-amino-acid chain; its full sequence is FLYWCH family member 2 (139 aa).

Disordered regions lie at residues 1–36 (MPQPKPSEQEGESMKASQEPAPQPGTDVVPAAPRKP) and 86–139 (EAQR…STSP). Positions 98–107 (PEQKRSKQNL) are enriched in basic and acidic residues. A compositionally biased stretch (low complexity) spans 120–130 (VSSSSSEETTV).

The polypeptide is FLYWCH family member 2 (Flywch2) (Mus musculus (Mouse)).